Consider the following 1058-residue polypeptide: Protein argonaute MEL1 (1058 aa).

Gly residues-rich tracts occupy residues 1–12 (MAYRGGGRGGRG) and 24–37 (DVPG…GGGA). Disordered regions lie at residues 1–77 (MAYR…YGAP) and 115–147 (RAPP…PSAT). The segment covering 48 to 70 (WPPPGMTPRPGPPQPQYPRPGPP) has biased composition (pro residues). The span at 121-147 (HSSAPAPYQPAAAAPAPSSSSTAPSAT) shows a compositional bias: low complexity. The PAZ domain occupies 407 to 520 (TVIQFVEEFL…LPMEVCKIVE (114 aa)). One can recognise a Piwi domain in the interval 696–1016 (LLIVILPEVS…AAFRARYYVE (321 aa)).

This sequence belongs to the argonaute family. Ago subfamily.

The protein localises to the nucleus. It is found in the nucleolus. In terms of biological role, essential for the progression of premeiotic mitosis and meiosis during sporogenesis. Regulates the cell division of premeiotic germ cells, the proper modification of meiotic chromosomes, and the faithful progression of meiosis, probably via small RNA-mediated gene silencing. May be involved in histone H3 'Lys-9' demethylation in the pericentromeric region. The sequence is that of Protein argonaute MEL1 (MEL1) from Oryza sativa subsp. japonica (Rice).